The primary structure comprises 1167 residues: PH and Rap-GAP domain-containing protein DDB_G0271806 (1167 aa).

PH domains lie at 35–140 and 165–257; these read NCVK…SSSL and HVYL…SRIP. A disordered region spans residues 95–160; the sequence is GIDNNNCTNS…TNANTNNGLS (66 aa). Over residues 98–155 the composition is skewed to low complexity; the sequence is NNNCTNSNSNNNNNNSDLIHLSAPSLSSSTSSTISPISSSSSLTTTTTTTTTTTNANT. Disordered regions lie at residues 335–361, 376–400, and 645–734; these read SGGG…GGSL, WRFS…STQV, and YSRS…LEPE. Over residues 340–351 the composition is skewed to low complexity; that stretch reads NNSSPSSLQSQQ. Polar residues predominate over residues 648–676; the sequence is SEPNLQSCLSSSPSTRETMVPSSPSSHQL. The span at 687-732 shows a compositional bias: low complexity; the sequence is EQQLSSSSSSSSQQLQLQLQQQEQEQLLQEQPEAEQSQPEPQPQLE. One can recognise a Rap-GAP domain in the interval 950-1162; that stretch reads LLSFEERQTT…RTRESLLNYY (213 aa).

This chain is PH and Rap-GAP domain-containing protein DDB_G0271806, found in Dictyostelium discoideum (Social amoeba).